The sequence spans 299 residues: Deoxyhypusine hydroxylase (299 aa).

5 HEAT-like PBS-type repeats span residues 54–80 (LKHE…VLQD), 87–113 (VRHE…YSED), 174–200 (DRYR…GLRA), 205–231 (FRHE…ALRS), and 238–264 (VRHE…FAQD). Histidine 56, histidine 89, and glutamate 90 together coordinate Fe cation. Residues histidine 207, histidine 240, and glutamate 241 each coordinate Fe cation.

This sequence belongs to the deoxyhypusine hydroxylase family. Requires Fe(2+) as cofactor.

The enzyme catalyses [eIF5A protein]-deoxyhypusine + AH2 + O2 = [eIF5A protein]-hypusine + A + H2O. It participates in protein modification; eIF5A hypusination. Its function is as follows. Catalyzes the hydroxylation of the N(6)-(4-aminobutyl)-L-lysine intermediate produced by deoxyhypusine synthase/DHPS on a critical lysine of the eukaryotic translation initiation factor 5A/eIF-5A. This is the second step of the post-translational modification of that lysine into an unusual amino acid residue named hypusine. Hypusination is unique to mature eIF-5A factor and is essential for its function. The chain is Deoxyhypusine hydroxylase from Gallus gallus (Chicken).